The sequence spans 230 residues: MAHPSQLGFQDAASPVMEELLHFHDHALMIVFLISTLVLYIIAATASTKLTDKYILDSQEIEVIWTIMPAVILILIALPSLRILYLMDEINDPHLTVKTMGHQWYWSYEYTDYDDLSFDSYMIPTQDLTPGQFRLLETDHRMVIPVDSPIRVLVSAEDVLHSWAVPSLGIKMDAVPGRLNQTAFIVSRPGVFYGQCSEICGANHSFMPIVVEAVPLEHFENWSSLMLEDA.

Over 1–14 (MAHPSQLGFQDAAS) the chain is Mitochondrial intermembrane. Residues 15 to 45 (PVMEELLHFHDHALMIVFLISTLVLYIIAAT) form a helical membrane-spanning segment. Topologically, residues 46–59 (ASTKLTDKYILDSQ) are mitochondrial matrix. A helical transmembrane segment spans residues 60-87 (EIEVIWTIMPAVILILIALPSLRILYLM). The Mitochondrial intermembrane portion of the chain corresponds to 88–230 (DEINDPHLTV…NWSSLMLEDA (143 aa)). Histidine 161, cysteine 196, glutamate 198, cysteine 200, histidine 204, and methionine 207 together coordinate Cu cation. Glutamate 198 provides a ligand contact to Mg(2+).

This sequence belongs to the cytochrome c oxidase subunit 2 family. Component of the cytochrome c oxidase (complex IV, CIV), a multisubunit enzyme composed of 14 subunits. The complex is composed of a catalytic core of 3 subunits MT-CO1, MT-CO2 and MT-CO3, encoded in the mitochondrial DNA, and 11 supernumerary subunits COX4I, COX5A, COX5B, COX6A, COX6B, COX6C, COX7A, COX7B, COX7C, COX8 and NDUFA4, which are encoded in the nuclear genome. The complex exists as a monomer or a dimer and forms supercomplexes (SCs) in the inner mitochondrial membrane with NADH-ubiquinone oxidoreductase (complex I, CI) and ubiquinol-cytochrome c oxidoreductase (cytochrome b-c1 complex, complex III, CIII), resulting in different assemblies (supercomplex SCI(1)III(2)IV(1) and megacomplex MCI(2)III(2)IV(2)). Found in a complex with TMEM177, COA6, COX18, COX20, SCO1 and SCO2. Interacts with TMEM177 in a COX20-dependent manner. Interacts with COX20. Interacts with COX16. The cofactor is Cu cation.

It is found in the mitochondrion inner membrane. The catalysed reaction is 4 Fe(II)-[cytochrome c] + O2 + 8 H(+)(in) = 4 Fe(III)-[cytochrome c] + 2 H2O + 4 H(+)(out). Functionally, component of the cytochrome c oxidase, the last enzyme in the mitochondrial electron transport chain which drives oxidative phosphorylation. The respiratory chain contains 3 multisubunit complexes succinate dehydrogenase (complex II, CII), ubiquinol-cytochrome c oxidoreductase (cytochrome b-c1 complex, complex III, CIII) and cytochrome c oxidase (complex IV, CIV), that cooperate to transfer electrons derived from NADH and succinate to molecular oxygen, creating an electrochemical gradient over the inner membrane that drives transmembrane transport and the ATP synthase. Cytochrome c oxidase is the component of the respiratory chain that catalyzes the reduction of oxygen to water. Electrons originating from reduced cytochrome c in the intermembrane space (IMS) are transferred via the dinuclear copper A center (CU(A)) of subunit 2 and heme A of subunit 1 to the active site in subunit 1, a binuclear center (BNC) formed by heme A3 and copper B (CU(B)). The BNC reduces molecular oxygen to 2 water molecules using 4 electrons from cytochrome c in the IMS and 4 protons from the mitochondrial matrix. This Tetraodon nigroviridis (Spotted green pufferfish) protein is Cytochrome c oxidase subunit 2 (mt-co2).